The following is a 545-amino-acid chain: Phenylalanine--tRNA ligase beta subunit (545 aa).

One can recognise a B5 domain in the interval 268–343 (FLHKIQNVRE…MSIGYNNLEP (76 aa)). The Mg(2+) site is built by Asp321, Asp327, Glu330, and Asp331.

This sequence belongs to the phenylalanyl-tRNA synthetase beta subunit family. Type 2 subfamily. In terms of assembly, tetramer of two alpha and two beta subunits. It depends on Mg(2+) as a cofactor.

It localises to the cytoplasm. The catalysed reaction is tRNA(Phe) + L-phenylalanine + ATP = L-phenylalanyl-tRNA(Phe) + AMP + diphosphate + H(+). In Saccharolobus islandicus (strain L.S.2.15 / Lassen #1) (Sulfolobus islandicus), this protein is Phenylalanine--tRNA ligase beta subunit.